A 717-amino-acid polypeptide reads, in one-letter code: F-box only protein 42 (717 aa).

Residues 1 to 30 (MASSSDSEDDSFMAVDQEETVLEGTMEQDE) show a composition bias toward acidic residues. A disordered region spans residues 1–47 (MASSSDSEDDSFMAVDQEETVLEGTMEQDEEPHPVLEAEETRHNRSM). Positions 31–43 (EPHPVLEAEETRH) are enriched in basic and acidic residues. The F-box domain maps to 44–93 (NRSMSELPEEVLEYILSFLSPYQEHKTAALVCKQWYRLIKGVAHQCYHGF). Kelch repeat units lie at residues 132 to 184 (SMYV…VYKD), 186 to 242 (LVLF…VIDD), 244 to 293 (MIVF…VIDD), and 295 to 342 (TILI…LWCH). Disordered regions lie at residues 361 to 472 (RAPL…SAAE) and 508 to 539 (PASS…GVHT). A compositionally biased stretch (low complexity) spans 363–376 (PLSPSLNSRPSPIS). Residues Ser-365 and Ser-373 each carry the phosphoserine modification. At Thr-378 the chain carries Phosphothreonine. Composition is skewed to polar residues over residues 416-426 (QRQTPSGSREG) and 455-469 (SLDS…STPS). Ser-552 bears the Phosphoserine mark. The span at 570 to 596 (GPSASAALSPPLGSSPGSPGSQSLSSG) shows a compositional bias: low complexity. The disordered stretch occupies residues 570–635 (GPSASAALSP…PQSLNVGKPL (66 aa)).

Component of some SCF complex, composed of CUL1, SKP1, RBX1 and FBXO42. Interacts (via the kelch domain) with p53/TP53; interaction is direct.

In terms of biological role, substrate-recognition component of some SCF (SKP1-CUL1-F-box protein)-type E3 ubiquitin ligase complex. Specifically recognizes p53/TP53, promoting its ubiquitination and degradation. The polypeptide is F-box only protein 42 (FBXO42) (Pongo abelii (Sumatran orangutan)).